The primary structure comprises 327 residues: Phenylalanine--tRNA ligase alpha subunit (327 aa).

E252 provides a ligand contact to Mg(2+).

This sequence belongs to the class-II aminoacyl-tRNA synthetase family. Phe-tRNA synthetase alpha subunit type 1 subfamily. In terms of assembly, tetramer of two alpha and two beta subunits. Mg(2+) is required as a cofactor.

It is found in the cytoplasm. The enzyme catalyses tRNA(Phe) + L-phenylalanine + ATP = L-phenylalanyl-tRNA(Phe) + AMP + diphosphate + H(+). The polypeptide is Phenylalanine--tRNA ligase alpha subunit (Shewanella woodyi (strain ATCC 51908 / MS32)).